The following is a 401-amino-acid chain: Pyruvyl transferase 1 (401 aa).

Residues 1–30 (MFANINIRKSVWLFLLAAVSCTLFIYGVTR) form the signal peptide. The disordered stretch occupies residues 38–64 (NPSSLTSPSSSTSVDKKKPLFTKSPRN). Residues 39–50 (PSSLTSPSSSTS) are compositionally biased toward low complexity.

This sequence belongs to the polysaccharide pyruvyl transferase family.

In terms of biological role, involved in cell wall biogenesis. Has a role in the addition of Gal-beta1,3 moieties to galactomannans and their subsequent pyruvylation. The chain is Pyruvyl transferase 1 (pvg1) from Schizosaccharomyces pombe (strain 972 / ATCC 24843) (Fission yeast).